The chain runs to 177 residues: Outer membrane lipoprotein Blc (177 aa).

A signal peptide spans 1 to 18 (MRLLPLVAAATAAFLVVA). A lipid anchor (N-palmitoyl cysteine) is attached at Cys19. The S-diacylglycerol cysteine moiety is linked to residue Cys19.

It belongs to the calycin superfamily. Lipocalin family. In terms of assembly, homodimer.

It is found in the cell outer membrane. In terms of biological role, involved in the storage or transport of lipids necessary for membrane maintenance under stressful conditions. Displays a binding preference for lysophospholipids. This Escherichia coli O157:H7 protein is Outer membrane lipoprotein Blc (blc).